The primary structure comprises 246 residues: Chlorophyll a-b binding protein 6A, chloroplastic (246 aa).

A chloroplast-targeting transit peptide spans 1–45; sequence MASNTLMSCGIPAVCPSFLSSTKSKFAAAMPVYVGATNFMSRFSM. Trp-49 is a binding site for chlorophyll b. Residues Phe-69, Glu-88, and His-91 each coordinate chlorophyll a. Arg-93 is a binding site for chlorophyll b. The chain crosses the membrane as a helical span at residues 94–114; it reads WAMLAVPGIIVPEALGLGNWV. Position 130 (Leu-130) interacts with chlorophyll a. A helical membrane pass occupies residues 133-153; that stretch reads PVPWGTLPTILAIEFLAIAFV. Positions 134, 154, and 157 each coordinate chlorophyll b. Chlorophyll a is bound by residues Lys-191, Glu-192, Asn-195, Arg-197, Gln-209, and His-225.

This sequence belongs to the light-harvesting chlorophyll a/b-binding (LHC) protein family. In terms of assembly, the LHC complex consists of chlorophyll a-b binding proteins. Binds at least 14 chlorophylls (8 Chl-a and 6 Chl-b) and carotenoids such as lutein and neoxanthin. is required as a cofactor. In terms of processing, photoregulated by reversible phosphorylation of its threonine residues.

It localises to the plastid. It is found in the chloroplast thylakoid membrane. Its function is as follows. The light-harvesting complex (LHC) functions as a light receptor, it captures and delivers excitation energy to photosystems with which it is closely associated. The protein is Chlorophyll a-b binding protein 6A, chloroplastic (CAB6A) of Solanum lycopersicum (Tomato).